Reading from the N-terminus, the 314-residue chain is Protein YdgH (314 aa).

The N-terminal stretch at 1–19 (MKLKNTLLASALLSAMAFS) is a signal peptide.

To E.coli YjfY.

This Escherichia coli (strain K12) protein is Protein YdgH (ydgH).